The following is a 213-amino-acid chain: Thiamine-phosphate synthase (213 aa).

4-amino-2-methyl-5-(diphosphooxymethyl)pyrimidine contacts are provided by residues 42–46 and D77; that span reads QYREK. Mg(2+) contacts are provided by D78 and D97. Position 116 (S116) interacts with 4-amino-2-methyl-5-(diphosphooxymethyl)pyrimidine. 142–144 serves as a coordination point for 2-[(2R,5Z)-2-carboxy-4-methylthiazol-5(2H)-ylidene]ethyl phosphate; the sequence is TIS. Residue K145 participates in 4-amino-2-methyl-5-(diphosphooxymethyl)pyrimidine binding. 2-[(2R,5Z)-2-carboxy-4-methylthiazol-5(2H)-ylidene]ethyl phosphate contacts are provided by residues G173 and 193–194; that span reads IS.

This sequence belongs to the thiamine-phosphate synthase family. It depends on Mg(2+) as a cofactor.

It catalyses the reaction 2-[(2R,5Z)-2-carboxy-4-methylthiazol-5(2H)-ylidene]ethyl phosphate + 4-amino-2-methyl-5-(diphosphooxymethyl)pyrimidine + 2 H(+) = thiamine phosphate + CO2 + diphosphate. It carries out the reaction 2-(2-carboxy-4-methylthiazol-5-yl)ethyl phosphate + 4-amino-2-methyl-5-(diphosphooxymethyl)pyrimidine + 2 H(+) = thiamine phosphate + CO2 + diphosphate. The enzyme catalyses 4-methyl-5-(2-phosphooxyethyl)-thiazole + 4-amino-2-methyl-5-(diphosphooxymethyl)pyrimidine + H(+) = thiamine phosphate + diphosphate. It participates in cofactor biosynthesis; thiamine diphosphate biosynthesis; thiamine phosphate from 4-amino-2-methyl-5-diphosphomethylpyrimidine and 4-methyl-5-(2-phosphoethyl)-thiazole: step 1/1. In terms of biological role, condenses 4-methyl-5-(beta-hydroxyethyl)thiazole monophosphate (THZ-P) and 2-methyl-4-amino-5-hydroxymethyl pyrimidine pyrophosphate (HMP-PP) to form thiamine monophosphate (TMP). In Limosilactobacillus fermentum (strain NBRC 3956 / LMG 18251) (Lactobacillus fermentum), this protein is Thiamine-phosphate synthase.